A 339-amino-acid polypeptide reads, in one-letter code: MKEKLQQIKNTALEELNKISNKAELENIRVKYLGKKGELTQILRGMGKLSSQERPVIGKLANEVRGSIEELIEKAVTEIKLKEKEAKLKNEVIDISMPGRKQTVGRKNPLQLTLDSIMDIFISMGFSIEEGPEVEKDYYNFEALNIPKNHPARGEQDTFYINDDVVLRTQTSPIQVRTMENQKPPIKMIAPGKVYRSDSVDATHSPIFYQIEGLVIDKGITFADLKGTLELFTKKMFGEKMQTKFRPHHFPFTEPSAEMDATCFVCGGKGCNVCKNSGWIELLGCGMVHPDVLRNCGIDPEVYSGFAFGFGLDRMVMQKYELDDIRLLYESDMRFLNQF.

Glutamate 254 contacts Mg(2+).

This sequence belongs to the class-II aminoacyl-tRNA synthetase family. Phe-tRNA synthetase alpha subunit type 1 subfamily. Tetramer of two alpha and two beta subunits. Mg(2+) serves as cofactor.

It is found in the cytoplasm. The catalysed reaction is tRNA(Phe) + L-phenylalanine + ATP = L-phenylalanyl-tRNA(Phe) + AMP + diphosphate + H(+). The polypeptide is Phenylalanine--tRNA ligase alpha subunit (Clostridium novyi (strain NT)).